The chain runs to 416 residues: Glutamyl-tRNA reductase (416 aa).

Residues 49–52, serine 105, 110–112, and glutamine 116 each bind substrate; these read TCNR and EPQ. Cysteine 50 acts as the Nucleophile in catalysis. 185–190 provides a ligand contact to NADP(+); sequence GAGETI.

It belongs to the glutamyl-tRNA reductase family. In terms of assembly, homodimer.

It catalyses the reaction (S)-4-amino-5-oxopentanoate + tRNA(Glu) + NADP(+) = L-glutamyl-tRNA(Glu) + NADPH + H(+). It functions in the pathway porphyrin-containing compound metabolism; protoporphyrin-IX biosynthesis; 5-aminolevulinate from L-glutamyl-tRNA(Glu): step 1/2. Catalyzes the NADPH-dependent reduction of glutamyl-tRNA(Glu) to glutamate 1-semialdehyde (GSA). The chain is Glutamyl-tRNA reductase from Shewanella baltica (strain OS223).